The chain runs to 277 residues: Pristinamycin IIA synthase subunit B (277 aa).

As to quaternary structure, heterodimer of two subunits, SnaA and SnaB. FMN serves as cofactor.

Functionally, catalyzes the oxidation of the proline residue of pristinamycin IIB (PIIB) to pristinamycin IIA (PIIA). The chain is Pristinamycin IIA synthase subunit B (snaB) from Streptomyces pristinaespiralis.